Consider the following 126-residue polypeptide: Fluoride-specific ion channel FluC (126 aa).

4 helical membrane passes run 1–21 (MTAT…RFHA), 33–53 (AVFP…MGVL), 72–92 (VGVL…ALLV), and 97–117 (IGLA…GLFL). Na(+) is bound by residues glycine 76 and threonine 79.

It belongs to the fluoride channel Fluc/FEX (TC 1.A.43) family.

The protein resides in the cell inner membrane. The catalysed reaction is fluoride(in) = fluoride(out). Na(+) is not transported, but it plays an essential structural role and its presence is essential for fluoride channel function. Functionally, fluoride-specific ion channel. Important for reducing fluoride concentration in the cell, thus reducing its toxicity. The sequence is that of Fluoride-specific ion channel FluC from Novosphingobium aromaticivorans (strain ATCC 700278 / DSM 12444 / CCUG 56034 / CIP 105152 / NBRC 16084 / F199).